A 219-amino-acid chain; its full sequence is GTP-binding protein drn-1 (219 aa).

GTP contacts are provided by residues 37–44 (GAGGVGKS), 56–62 (NENYVPT), 85–89 (DTTGS), 146–149 (NKKD), and 177–178 (AK). Positions 59 to 67 (YVPTIEDTY) match the Effector region motif. Cys216 is subject to Cysteine methyl ester. A lipid anchor (S-geranylgeranyl cysteine) is attached at Cys216. The propeptide at 217 to 219 (HIM) is removed in mature form.

This sequence belongs to the small GTPase superfamily. Di-Ras family. Interacts with epac-1 (via C-terminus). Expressed specifically in neurons including the nerve ring, ventral and dorsal nerve cord motor neurons and tail ganglia.

Its subcellular location is the cell membrane. Functionally, displays low GTPase activity and exists predominantly in the GTP-bound form. Together with epac-1, may regulate acetylcholine release at the neuromuscular junctions probably downstream of G-protein gsa-1 and adenylate cyclase acy-1. The chain is GTP-binding protein drn-1 from Caenorhabditis elegans.